We begin with the raw amino-acid sequence, 612 residues long: Chaperone protein DnaK (612 aa).

Phosphothreonine; by autocatalysis is present on Thr173. The tract at residues 576-612 (AAKAQQAEGGANAEGKKADDNVVDAEYEEVKDDETKK) is disordered. Over residues 578 to 588 (KAQQAEGGANA) the composition is skewed to low complexity. The span at 596–612 (NVVDAEYEEVKDDETKK) shows a compositional bias: acidic residues.

The protein belongs to the heat shock protein 70 family.

Acts as a chaperone. The protein is Chaperone protein DnaK of Bacillus velezensis (strain DSM 23117 / BGSC 10A6 / LMG 26770 / FZB42) (Bacillus amyloliquefaciens subsp. plantarum).